The following is a 443-amino-acid chain: Trigger factor (443 aa).

The PPIase FKBP-type domain maps to 163–248; that stretch reads GDTAVIDFEG…INEIKAKELP (86 aa).

Belongs to the FKBP-type PPIase family. Tig subfamily.

The protein localises to the cytoplasm. The catalysed reaction is [protein]-peptidylproline (omega=180) = [protein]-peptidylproline (omega=0). Functionally, involved in protein export. Acts as a chaperone by maintaining the newly synthesized protein in an open conformation. Functions as a peptidyl-prolyl cis-trans isomerase. The protein is Trigger factor of Agathobacter rectalis (strain ATCC 33656 / DSM 3377 / JCM 17463 / KCTC 5835 / VPI 0990) (Eubacterium rectale).